Reading from the N-terminus, the 48-residue chain is Hemoglobin subunit beta-B (48 aa).

The region spanning 2–48 (EWTDAERGAILSLWGKIDPDELGPALLARXXLVYXXTQRYFASFGDL) is the Globin domain.

It belongs to the globin family. As to quaternary structure, heterotetramer of two alpha chains and two beta chains. As to expression, red blood cells.

Its function is as follows. Involved in oxygen transport from gills to the various peripheral tissues. The chain is Hemoglobin subunit beta-B from Catostomus clarkii (Desert sucker).